A 35-amino-acid chain; its full sequence is uncharacterized protein (35 aa).

The first 25 residues, 1 to 25 (MTERKLLQLLRRPFISLSLFTALRA), serve as a signal peptide directing secretion.

This is an uncharacterized protein from Saccharomyces cerevisiae (strain ATCC 204508 / S288c) (Baker's yeast).